We begin with the raw amino-acid sequence, 348 residues long: dTDP-glucose 4,6-dehydratase (348 aa).

NAD(+) is bound by residues 15 to 16 (FI), 37 to 40 (DKLT), 62 to 63 (DI), and 82 to 86 (YAAES). S86 and N88 together coordinate substrate. T101 contributes to the NAD(+) binding site. T125 contributes to the substrate binding site. D126 acts as the Proton donor in catalysis. Active-site proton acceptor residues include E127 and Y161. 161–165 (YSSTK) is an NAD(+) binding site. A substrate-binding site is contributed by N190. N191 lines the NAD(+) pocket. Substrate contacts are provided by residues 200–205 (KFIPRQ), 216–218 (KLY), R225, N260, and 283–287 (DRAGH).

Belongs to the NAD(P)-dependent epimerase/dehydratase family. dTDP-glucose dehydratase subfamily. Homodimer. It depends on NAD(+) as a cofactor.

The catalysed reaction is dTDP-alpha-D-glucose = dTDP-4-dehydro-6-deoxy-alpha-D-glucose + H2O. Its pathway is carbohydrate biosynthesis; dTDP-L-rhamnose biosynthesis. Its function is as follows. Catalyzes the dehydration of dTDP-D-glucose to form dTDP-6-deoxy-D-xylo-4-hexulose via a three-step process involving oxidation, dehydration and reduction. The polypeptide is dTDP-glucose 4,6-dehydratase (rmlB) (Streptococcus mutans serotype c (strain ATCC 700610 / UA159)).